A 2158-amino-acid chain; its full sequence is Non-reducing polyketide synthase Preu8 (2158 aa).

An N-terminal acylcarrier protein transacylase domain (SAT) region spans residues 4-241 (LVLGDQVADH…TPIPVFAPYH (238 aa)). The region spanning 369-801 (NDKIAIVGMS…GGNTAIILED (433 aa)) is the Ketosynthase family 3 (KS3) domain. Catalysis depends on for beta-ketoacyl synthase activity residues Cys-541, His-676, and His-719. Residues 900–1215 (FTFTGQGSQY…ANSVSTLFLA (316 aa)) form a malonyl-CoA:ACP transacylase (MAT) domain region. Ser-989 functions as the For acyl/malonyl transferase activity in the catalytic mechanism. The product template (PT) domain stretch occupies residues 1285-1603 (SCQRIVREEL…RRVLNIMMPP (319 aa)). The interval 1287 to 1423 (QRIVREELHA…GTVKYEDVSQ (137 aa)) is N-terminal hotdog fold. The PKS/mFAS DH domain maps to 1287–1598 (QRIVREELHA…FQNIARRVLN (312 aa)). The Proton acceptor; for dehydratase activity role is filled by His-1319. The segment at 1451-1598 (AHKVLRGMAY…FQNIARRVLN (148 aa)) is C-terminal hotdog fold. The active-site Proton donor; for dehydratase activity is the Asp-1511. Over residues 1619–1639 (KKAASPTLAPAKAAKPAAKTS) the composition is skewed to low complexity. The interval 1619-1654 (KKAASPTLAPAKAAKPAAKTSKPSKARAKPAADSTT) is disordered. The Carrier 1 domain occupies 1651-1725 (DSTTSRVMKI…QMKKFFSQYD (75 aa)). Position 1685 is an O-(pantetheine 4'-phosphoryl)serine (Ser-1685). The segment at 1723–1779 (QYDGAPIPDDGDDSDGTDEPSNFSTPSYGADNASTPPSSAPSVNGKSSPENHEVLES) is disordered. Residues 1731 to 1740 (DDGDDSDGTD) are compositionally biased toward acidic residues. Positions 1743–1770 (SNFSTPSYGADNASTPPSSAPSVNGKSS) are enriched in polar residues. Residues 1779–1853 (STEVSLARKI…DIENELGMRP (75 aa)) form the Carrier 2 domain. Ser-1813 carries the post-translational modification O-(pantetheine 4'-phosphoryl)serine. The tract at residues 1847–1879 (NELGMRPKPKPKAEAAPPKSSAKASPSANKQPQ) is disordered. A compositionally biased stretch (low complexity) spans 1860–1876 (EAAPPKSSAKASPSANK). Residues 1894–2144 (SQYPPANSVL…NHFTMMKGDH (251 aa)) form a thioesterase (TE) domain region.

Requires pantetheine 4'-phosphate as cofactor.

Its function is as follows. Non-reducing polyketide synthase; part of a gene cluster that mediates the biosynthesis of a yet unidentified natural product. This Preussia isomera (Coprophilous fungus) protein is Non-reducing polyketide synthase Preu8.